The chain runs to 218 residues: uncharacterized protein (218 aa).

This is an uncharacterized protein from Rickettsia prowazekii (strain Madrid E).